The primary structure comprises 83 residues: MLTIRLALGGSKKRPFYHLTVTDSRNPRDGSHKEQVGFFNPVARGQEVRLSVNQERVAYWLSVGAQPSERVAKLLKDSAKAAA.

Belongs to the bacterial ribosomal protein bS16 family.

This chain is Small ribosomal subunit protein bS16, found in Pseudomonas fluorescens (strain SBW25).